Here is a 242-residue protein sequence, read N- to C-terminus: DnaJ homolog subfamily B member 3 (242 aa).

Positions 1-69 (MANYYEVLGV…KKRDVYDRYG (69 aa)) constitute a J domain.

In terms of tissue distribution, testis specific.

May operate as a co-chaperone of the male germ cell- and haploid stage-specific Hsp70 proteins. This is DnaJ homolog subfamily B member 3 (DNAJB3) from Macaca fuscata fuscata (Japanese macaque).